The chain runs to 328 residues: Beta-ketoacyl-[acyl-carrier-protein] synthase III (328 aa).

Active-site residues include Cys-114 and His-253. Residues 254–258 (QANIR) are ACP-binding. Asn-283 is a catalytic residue.

This sequence belongs to the thiolase-like superfamily. FabH family. As to quaternary structure, homodimer.

The protein localises to the cytoplasm. The enzyme catalyses malonyl-[ACP] + acetyl-CoA + H(+) = 3-oxobutanoyl-[ACP] + CO2 + CoA. The protein operates within lipid metabolism; fatty acid biosynthesis. Functionally, catalyzes the condensation reaction of fatty acid synthesis by the addition to an acyl acceptor of two carbons from malonyl-ACP. Catalyzes the first condensation reaction which initiates fatty acid synthesis and may therefore play a role in governing the total rate of fatty acid production. Possesses both acetoacetyl-ACP synthase and acetyl transacylase activities. Its substrate specificity determines the biosynthesis of branched-chain and/or straight-chain of fatty acids. In Clostridioides difficile (strain 630) (Peptoclostridium difficile), this protein is Beta-ketoacyl-[acyl-carrier-protein] synthase III.